The primary structure comprises 595 residues: MNEDVLRSSHLPIKLAALHFLDLPLSVYYSLPQVSLSTGTKKLFAATAFGAVSLIIIARRFRRRKGRRKANSPVEQETFEFLTTIHLSKESDSQSVPQNSENPYTCNVVSGALYNKLSGSLPSLVSVRSRHSSSSSTCANGSNCWEEAGDAADVCNLLSLPVATPENLYLMGMELFEEALRRWEQALTFRSRQAEDEGSCVSVKLGAGDAIAEESMEDIISADFIQKLESLLQRAYRLQEEFEGSLGVTDPTTHPTNVLLADKHMDLSVREELEDTCLRDSISIASTDSFVSAAELSEHREMRSGHALGSLSPHPFYEDALQMAEEGKISCRVLRTEMLECLGDADFLAKLHCVRQACQVILCERATRAFLADTGKRILSAIIAKARKSPKRFEEVFEEMISFLEHTDHWENTENELSSRGVKHMNFYDVVLDFILMDSFEDLENPPLSIQTVVNNRWLSNSFKETAVASSCWSVLKQKRQHMKVQDGFIAHFYAVCEHISPVLAWGFLGPKCTLQDFCCFFKEQVLFFLKDIFDLDKVRYFSLETLAEDILHLLHRRSDLLMAYLATDVIHHLNGCSDTSVHLVHSALLEAQVQ.

The next 2 membrane-spanning stretches (helical) occupy residues 11-31 (LPIKLAALHFLDLPLSVYYSL) and 38-58 (TGTKKLFAATAFGAVSLIIIA).

The protein belongs to the mitoguardin family. In terms of assembly, homodimer and heterodimer; forms heterodimers with miga2.

It localises to the mitochondrion outer membrane. Its function is as follows. Regulator of mitochondrial fusion: acts by forming homo- and heterodimers at the mitochondrial outer membrane and facilitating the formation of pld6/MitoPLD dimers. May act by regulating phospholipid metabolism via pld6/MitoPLD. This Danio rerio (Zebrafish) protein is Mitoguardin 1.